A 131-amino-acid polypeptide reads, in one-letter code: uncharacterized protein (131 aa).

Residues 17 to 39 (VILLILILLPVVFLHIMLATWGL) form a helical membrane-spanning segment.

Its subcellular location is the membrane. This is an uncharacterized protein from Archaeoglobus fulgidus (strain ATCC 49558 / DSM 4304 / JCM 9628 / NBRC 100126 / VC-16).